Here is a 129-residue protein sequence, read N- to C-terminus: Large ribosomal subunit protein uL14m (129 aa).

It belongs to the universal ribosomal protein uL14 family. Component of the mitochondrial ribosome large subunit (39S) which comprises a 16S rRNA and about 50 distinct proteins.

It localises to the mitochondrion. The protein is Large ribosomal subunit protein uL14m (mrpl14) of Dictyostelium discoideum (Social amoeba).